A 182-amino-acid polypeptide reads, in one-letter code: Transcription termination/antitermination protein NusG (182 aa).

The KOW domain maps to 131 to 161; that stretch reads GEVVRVNEGPFADFNGTVEEVDYEKSRLKVS.

This sequence belongs to the NusG family.

In terms of biological role, participates in transcription elongation, termination and antitermination. The protein is Transcription termination/antitermination protein NusG of Vibrio parahaemolyticus serotype O3:K6 (strain RIMD 2210633).